A 547-amino-acid polypeptide reads, in one-letter code: Zinc metalloproteinase-disintegrin-like BjussuMP-1 (547 aa).

Positions 1–133 (EFKVNGEPVV…KKASKLVVTA (133 aa)) are excised as a propeptide. The Peptidase M12B domain occupies 141–337 (RYVEIVVVVD…HNPQCILNEP (197 aa)). Positions 144 and 228 each coordinate Ca(2+). Intrachain disulfides connect C252–C332, C292–C316, and C294–C299. Zn(2+) is bound at residue H277. Residue E278 is part of the active site. The Zn(2+) site is built by H281 and H287. Positions 332, 335, 341, 344, 346, 348, 351, and 354 each coordinate Ca(2+). Positions 339–421 (LTVSGNELLE…DCPRNRFHRN (83 aa)) constitute a Disintegrin domain. 11 cysteine pairs are disulfide-bonded: C353/C363, C362/C385, C376/C382, C381/C406, C394/C413, C425/C437, C444/C494, C459/C501, C472/C482, C489/C526, and C520/C531. A glycan (N-linked (GlcNAc...) asparagine) is linked at N451. N-linked (GlcNAc...) asparagine glycosylation is present at N504.

It belongs to the venom metalloproteinase (M12B) family. P-III subfamily. P-IIIa sub-subfamily. In terms of assembly, monomer. Zn(2+) is required as a cofactor. In terms of tissue distribution, expressed by the venom gland.

The protein resides in the secreted. With respect to regulation, completely inhibited by EDTA, EGTA, 1,10-phenanthroline, and partially by beta-mercaptoethanol. Is not inhibited by aprotinin and leupeptin. In terms of biological role, this protein is a zinc metalloprotease from snake venom that causes hemorrhage in mice after intradermal injection. It inhibits platelet aggregation induced by collagen and ADP. Has moderate edema activity, but no myotoxic activity. It hydrolyzes the Aalpha-chain and more slowly the Bbeta-chain of fibrinogen, without affecting the gamma-chains. It also shows proteolytic activity on casein. It is unable to clot plasma. It also shows bactericidal activity against E.coli and S.aureus. The sequence is that of Zinc metalloproteinase-disintegrin-like BjussuMP-1 from Bothrops jararacussu (Jararacussu).